The chain runs to 497 residues: Acetyl-coenzyme A carboxylase carboxyl transferase subunit beta, chloroplastic (497 aa).

The 268-residue stretch at 230–497 (LWVQCENCYG…FFPLNQNSIK (268 aa)) folds into the CoA carboxyltransferase N-terminal domain. Positions 234, 237, 253, and 256 each coordinate Zn(2+). Residues 234 to 256 (CENCYGLNYKKFLKSKMNICEQC) form a C4-type zinc finger.

The protein belongs to the AccD/PCCB family. As to quaternary structure, acetyl-CoA carboxylase is a heterohexamer composed of biotin carboxyl carrier protein, biotin carboxylase and 2 subunits each of ACCase subunit alpha and ACCase plastid-coded subunit beta (accD). The cofactor is Zn(2+).

The protein resides in the plastid. It is found in the chloroplast stroma. It catalyses the reaction N(6)-carboxybiotinyl-L-lysyl-[protein] + acetyl-CoA = N(6)-biotinyl-L-lysyl-[protein] + malonyl-CoA. Its pathway is lipid metabolism; malonyl-CoA biosynthesis; malonyl-CoA from acetyl-CoA: step 1/1. Its function is as follows. Component of the acetyl coenzyme A carboxylase (ACC) complex. Biotin carboxylase (BC) catalyzes the carboxylation of biotin on its carrier protein (BCCP) and then the CO(2) group is transferred by the transcarboxylase to acetyl-CoA to form malonyl-CoA. The chain is Acetyl-coenzyme A carboxylase carboxyl transferase subunit beta, chloroplastic from Carica papaya (Papaya).